A 607-amino-acid chain; its full sequence is MNLQEMNARKEKIRNFSIIAHIDHGKSTLADRILEQTETVSKREMQAQLLDSMDLERERGITIKLNAIELNYKAKDGETYIFHLIDTPGHVDFTYEVSRSLAACEGAILVVDAAQGIEAQTLANVYLALDNDLEILPVINKIDLPAADPEMVRQEIEDVIGLDASEAVLASAKAGIGIEEILEQIVEKVPAPQGEVDAPLKALIFDSVYDAYRGVILQIRVIDGSVKVGDRIQLMSNGKEFDVTEVGIFTPKAVSRDFLMAGDVGYVAAAIKTVADTRVGDTVTLASNPATEALEGYKEMNPMVFAGIYPIESNKFNDLREALEKLQLNDASLRFEPETSQALGFGFRCGFLGLLHMDVIQERLEREFGIDLIMTAPSVVYHINTTDGETLEVANPSEFPDPTRIENIEEPFVKAQIMVPNDFVGPVMELAQRKRGIFLTMDYLDANRVNIIYHIPLSEIVFDFFDKLKSSTKGYASFDYEISDYRPSNLVKMDILLNAEKVDALSFIVHKDFAFERGKVIVEKLKKLIPRQQFEVPIQATIGNKIVARSDIKALRKNVLAKCYGGDISRKRKLLEKQKAGKKRMKAIGSVEVPQEAFLSVLSMDEE.

The tr-type G domain maps to 11 to 193 (EKIRNFSIIA…QIVEKVPAPQ (183 aa)). GTP-binding positions include 23–28 (DHGKST) and 140–143 (NKID).

This sequence belongs to the TRAFAC class translation factor GTPase superfamily. Classic translation factor GTPase family. LepA subfamily.

It localises to the cell membrane. It carries out the reaction GTP + H2O = GDP + phosphate + H(+). Its function is as follows. Required for accurate and efficient protein synthesis under certain stress conditions. May act as a fidelity factor of the translation reaction, by catalyzing a one-codon backward translocation of tRNAs on improperly translocated ribosomes. Back-translocation proceeds from a post-translocation (POST) complex to a pre-translocation (PRE) complex, thus giving elongation factor G a second chance to translocate the tRNAs correctly. Binds to ribosomes in a GTP-dependent manner. In Lactococcus lactis subsp. cremoris (strain MG1363), this protein is Elongation factor 4.